The following is a 560-amino-acid chain: Eukaryotic translation initiation factor 3 subunit D-1 (560 aa).

Residues 98-166 (VQKPPHQRGR…RGPPPKMRES (69 aa)) form a disordered region. Positions 100–121 (KPPHQRGRFRNMRNSRSGRGRN) are enriched in basic residues. Threonine 128 is subject to Phosphothreonine. A compositionally biased stretch (basic residues) spans 147–156 (GRGMGKKFGH). Residues 291–305 (EFDLLTVNESSVEPP) form an RNA gate region.

The protein belongs to the eIF-3 subunit D family. Component of the eukaryotic translation initiation factor 3 (eIF-3) complex. The eIF-3 complex interacts with pix.

It is found in the cytoplasm. In terms of biological role, mRNA cap-binding component of the eukaryotic translation initiation factor 3 (eIF-3) complex, which is involved in protein synthesis of a specialized repertoire of mRNAs and, together with other initiation factors, stimulates binding of mRNA and methionyl-tRNAi to the 40S ribosome. The eIF-3 complex specifically targets and initiates translation of a subset of mRNAs involved in cell proliferation. In the eIF-3 complex, eif3d specifically recognizes and binds the 7-methylguanosine cap of a subset of mRNAs. This chain is Eukaryotic translation initiation factor 3 subunit D-1, found in Drosophila simulans (Fruit fly).